We begin with the raw amino-acid sequence, 121 residues long: Ribonuclease P protein component (121 aa).

It belongs to the RnpA family. Consists of a catalytic RNA component (M1 or rnpB) and a protein subunit.

It carries out the reaction Endonucleolytic cleavage of RNA, removing 5'-extranucleotides from tRNA precursor.. RNaseP catalyzes the removal of the 5'-leader sequence from pre-tRNA to produce the mature 5'-terminus. It can also cleave other RNA substrates such as 4.5S RNA. The protein component plays an auxiliary but essential role in vivo by binding to the 5'-leader sequence and broadening the substrate specificity of the ribozyme. The protein is Ribonuclease P protein component of Chromobacterium violaceum (strain ATCC 12472 / DSM 30191 / JCM 1249 / CCUG 213 / NBRC 12614 / NCIMB 9131 / NCTC 9757 / MK).